The following is a 199-amino-acid chain: Large ribosomal subunit protein uL18 (199 aa).

Belongs to the universal ribosomal protein uL18 family. In terms of assembly, part of the 50S ribosomal subunit. Contacts the 5S and 23S rRNAs.

Its function is as follows. This is one of the proteins that bind and probably mediate the attachment of the 5S RNA into the large ribosomal subunit, where it forms part of the central protuberance. The protein is Large ribosomal subunit protein uL18 of Saccharolobus solfataricus (strain ATCC 35092 / DSM 1617 / JCM 11322 / P2) (Sulfolobus solfataricus).